The primary structure comprises 892 residues: E3 ubiquitin ligase PQT3-like (892 aa).

Residues 3 to 76 (IYYKFKSARD…NTSVLIRRVP (74 aa)) enclose the DWNN domain. The segment at 210-224 (CHRCNIPGHFIQHCP) adopts a CCHC-type zinc-finger fold. The residue at position 285 (serine 285) is a Phosphoserine. An RING-type; degenerate zinc finger spans residues 295–333 (CPLCKEVMKDAALTSKCCYKSFCDKCIRDHIISKSMCVC). Disordered regions lie at residues 375 to 408 (DLES…NNND), 459 to 493 (TQAP…MQWN), and 623 to 892 (MLRK…RSRA). Serine 404 carries the phosphoserine modification. Residues 623-644 (MLRKRENERRPEGGKMFRDGEN) are compositionally biased toward basic and acidic residues. Residues 647 to 666 (MMMNNGTSASASSINPNKSR) show a composition bias toward polar residues. Positions 674-692 (HDYDRRRRPEKRLSPEHPP) are enriched in basic and acidic residues. The short motif at 693–700 (TRKNISPS) is the Nuclear localization signal element. A compositionally biased stretch (basic and acidic residues) spans 708–745 (ERYPDERDRQRDRERSRHQDVDREHDRTRDRRDEDRSR). The segment covering 810–832 (SSSSTSVTDPSASASAAAAVGTS) has biased composition (low complexity). Serine 866 bears the Phosphoserine mark. Residues 875-892 (SEDKLRYSKRGKGERSRA) show a composition bias toward basic and acidic residues.

It localises to the nucleus. The catalysed reaction is S-ubiquitinyl-[E2 ubiquitin-conjugating enzyme]-L-cysteine + [acceptor protein]-L-lysine = [E2 ubiquitin-conjugating enzyme]-L-cysteine + N(6)-ubiquitinyl-[acceptor protein]-L-lysine.. In Arabidopsis thaliana (Mouse-ear cress), this protein is E3 ubiquitin ligase PQT3-like.